A 475-amino-acid polypeptide reads, in one-letter code: Aspartyl/glutamyl-tRNA(Asn/Gln) amidotransferase subunit B (475 aa).

This sequence belongs to the GatB/GatE family. GatB subfamily. In terms of assembly, heterotrimer of A, B and C subunits.

It catalyses the reaction L-glutamyl-tRNA(Gln) + L-glutamine + ATP + H2O = L-glutaminyl-tRNA(Gln) + L-glutamate + ADP + phosphate + H(+). It carries out the reaction L-aspartyl-tRNA(Asn) + L-glutamine + ATP + H2O = L-asparaginyl-tRNA(Asn) + L-glutamate + ADP + phosphate + 2 H(+). Allows the formation of correctly charged Asn-tRNA(Asn) or Gln-tRNA(Gln) through the transamidation of misacylated Asp-tRNA(Asn) or Glu-tRNA(Gln) in organisms which lack either or both of asparaginyl-tRNA or glutaminyl-tRNA synthetases. The reaction takes place in the presence of glutamine and ATP through an activated phospho-Asp-tRNA(Asn) or phospho-Glu-tRNA(Gln). This Chlorobaculum tepidum (strain ATCC 49652 / DSM 12025 / NBRC 103806 / TLS) (Chlorobium tepidum) protein is Aspartyl/glutamyl-tRNA(Asn/Gln) amidotransferase subunit B.